The following is a 179-amino-acid chain: Deoxyuridine 5'-triphosphate nucleotidohydrolase (179 aa).

Substrate-binding positions include 90–92 (RSG), Asn-103, 107–109 (TVD), and Lys-117.

Belongs to the dUTPase family. Mg(2+) is required as a cofactor.

The enzyme catalyses dUTP + H2O = dUMP + diphosphate + H(+). Its pathway is pyrimidine metabolism; dUMP biosynthesis; dUMP from dCTP (dUTP route): step 2/2. Its function is as follows. This enzyme is involved in nucleotide metabolism: it produces dUMP, the immediate precursor of thymidine nucleotides and it decreases the intracellular concentration of dUTP so that uracil cannot be incorporated into DNA. In Thermobifida fusca (strain YX), this protein is Deoxyuridine 5'-triphosphate nucleotidohydrolase.